The primary structure comprises 423 residues: Kynureninase (423 aa).

Pyridoxal 5'-phosphate is bound by residues L105, S106, 133–136, D218, H221, and Y243; that span reads FPSD. N6-(pyridoxal phosphate)lysine is present on K244. Positions 273 and 301 each coordinate pyridoxal 5'-phosphate.

This sequence belongs to the kynureninase family. Homodimer. The cofactor is pyridoxal 5'-phosphate.

The enzyme catalyses L-kynurenine + H2O = anthranilate + L-alanine + H(+). It carries out the reaction 3-hydroxy-L-kynurenine + H2O = 3-hydroxyanthranilate + L-alanine + H(+). It participates in amino-acid degradation; L-kynurenine degradation; L-alanine and anthranilate from L-kynurenine: step 1/1. The protein operates within cofactor biosynthesis; NAD(+) biosynthesis; quinolinate from L-kynurenine: step 2/3. Catalyzes the cleavage of L-kynurenine (L-Kyn) and L-3-hydroxykynurenine (L-3OHKyn) into anthranilic acid (AA) and 3-hydroxyanthranilic acid (3-OHAA), respectively. The chain is Kynureninase from Xanthomonas oryzae pv. oryzae (strain MAFF 311018).